Consider the following 39-residue polypeptide: PVNEAGVERLFRALVGRGCPADCPNTCDSSNECSPNFPG.

A propeptide spanning residues 1 to 16 (PVNEAGVERLFRALVG) is cleaved from the precursor. The residue at position 38 (Pro-38) is a Proline amide.

Contains 2 disulfide bonds. As to expression, expressed by the venom duct.

It localises to the secreted. The chain is Conotoxin Cl14.5 from Californiconus californicus (California cone).